The sequence spans 366 residues: Cell division protein FtsY homolog, chloroplastic (366 aa).

Residues 1 to 40 (MATSSAHLSFLAGRISPFSSERIGLFPLRGEFRPRMTRFR) constitute a chloroplast transit peptide. GTP is bound by residues 171–178 (GVNGGGKT), 254–258 (DTSGR), and 318–321 (TKLD).

It belongs to the GTP-binding SRP family. As to quaternary structure, monomer. Interacts with FFC/cpSRP54, a component of the cpSRP complex, composed of a FFC/cpSRP54 monomer and a CAO/cpSRP43 dimer. The complex with FFC/cpSRP54 is formed when both proteins are bound with GTP. Expressed in green tissues. Low levels in roots and seeds.

It localises to the plastid. The protein resides in the chloroplast stroma. Its subcellular location is the chloroplast thylakoid membrane. Signal recognition particle receptor protein. Binds GTP specifically. The GTPase activity is inhibited by the N-terminus of the protein until binding to the thylakoid membrane. Activates the GTPase activity of FFC/cpSRP54 when bound to the cpSRP complex. Required for light-harvesting chlorophyll a/b-binding protein (LHCP) integration into thylakoids. Might be also functionally linked to the Sec translocation machinery. The sequence is that of Cell division protein FtsY homolog, chloroplastic (CPFTSY) from Arabidopsis thaliana (Mouse-ear cress).